A 285-amino-acid chain; its full sequence is UPF0173 metal-dependent hydrolase Pnuc_1524 (285 aa).

This sequence belongs to the UPF0173 family.

This chain is UPF0173 metal-dependent hydrolase Pnuc_1524, found in Polynucleobacter asymbioticus (strain DSM 18221 / CIP 109841 / QLW-P1DMWA-1) (Polynucleobacter necessarius subsp. asymbioticus).